We begin with the raw amino-acid sequence, 459 residues long: MSPQTETKASAGFKAGVKDYKLTYYTPDYETKDTDILAAFRVTPQPGVPPEEAGAAVAAESSTGTWTTVWTDGLTSLDRYKGRCYHIESVVGEEDQFIAYVAYPLDLFEEGSVTNMFTSIVGNVFGFKALRALRLEDLRIPPAYSKTFQGPPHGIQVERDKLNKYGRPLLGCTIKPKLGLSAKNYGRAVYECLRGGLDFTKDDENVNSQPFMRWRDRFLFCAEAIYKAQAETGEIKGHYLNATAGTCEEMIKRAVFARELGVPIVMHDYLAGGFTANTSLAFYCRDNGLLLHIHRAMHAVIDRQKNHGMHFRVLAKALRMSGGDHIHAGTVVGKLEGEREMTLGFVDLLRDDFIEKDRSRGIFFTQDWVSMPGVLPVASGGIHVWHMPALTEIFGDDSVLQFGGGTLGHPWGNAPGAVANRVALEACVQARNEGRDLAREGNEIIREACKWSPELAAAC.

A propeptide spanning residues 1 to 2 (MS) is cleaved from the precursor. Pro-3 carries the post-translational modification N-acetylproline. Residue Lys-14 is modified to N6,N6,N6-trimethyllysine. Residues Asn-123 and Thr-173 each contribute to the substrate site. Lys-175 (proton acceptor) is an active-site residue. Position 177 (Lys-177) interacts with substrate. Residues Lys-201, Asp-203, and Glu-204 each contribute to the Mg(2+) site. At Lys-201 the chain carries N6-carboxylysine. His-294 (proton acceptor) is an active-site residue. Substrate-binding residues include Arg-295, His-327, and Ser-379.

The protein belongs to the RuBisCO large chain family. Type I subfamily. As to quaternary structure, heterohexadecamer of 8 large chains and 8 small chains; disulfide-linked. The disulfide link is formed within the large subunit homodimers. The cofactor is Mg(2+). In terms of processing, the disulfide bond which can form in the large chain dimeric partners within the hexadecamer appears to be associated with oxidative stress and protein turnover.

It is found in the plastid. It localises to the chloroplast. It catalyses the reaction 2 (2R)-3-phosphoglycerate + 2 H(+) = D-ribulose 1,5-bisphosphate + CO2 + H2O. The catalysed reaction is D-ribulose 1,5-bisphosphate + O2 = 2-phosphoglycolate + (2R)-3-phosphoglycerate + 2 H(+). In terms of biological role, ruBisCO catalyzes two reactions: the carboxylation of D-ribulose 1,5-bisphosphate, the primary event in carbon dioxide fixation, as well as the oxidative fragmentation of the pentose substrate in the photorespiration process. Both reactions occur simultaneously and in competition at the same active site. The protein is Ribulose bisphosphate carboxylase large chain of Streptopus lanceolatus (Rose twisted stalk).